Consider the following 73-residue polypeptide: DNA-directed RNA polymerase subunit omega (73 aa).

Belongs to the RNA polymerase subunit omega family. The RNAP catalytic core consists of 2 alpha, 1 beta, 1 beta' and 1 omega subunit. When a sigma factor is associated with the core the holoenzyme is formed, which can initiate transcription.

The enzyme catalyses RNA(n) + a ribonucleoside 5'-triphosphate = RNA(n+1) + diphosphate. Functionally, promotes RNA polymerase assembly. Latches the N- and C-terminal regions of the beta' subunit thereby facilitating its interaction with the beta and alpha subunits. The protein is DNA-directed RNA polymerase subunit omega of Oleidesulfovibrio alaskensis (strain ATCC BAA-1058 / DSM 17464 / G20) (Desulfovibrio alaskensis).